The following is a 178-amino-acid chain: ATP synthase subunit delta (178 aa).

Belongs to the ATPase delta chain family. F-type ATPases have 2 components, F(1) - the catalytic core - and F(0) - the membrane proton channel. F(1) has five subunits: alpha(3), beta(3), gamma(1), delta(1), epsilon(1). F(0) has three main subunits: a(1), b(2) and c(10-14). The alpha and beta chains form an alternating ring which encloses part of the gamma chain. F(1) is attached to F(0) by a central stalk formed by the gamma and epsilon chains, while a peripheral stalk is formed by the delta and b chains.

It is found in the cell membrane. In terms of biological role, f(1)F(0) ATP synthase produces ATP from ADP in the presence of a proton or sodium gradient. F-type ATPases consist of two structural domains, F(1) containing the extramembraneous catalytic core and F(0) containing the membrane proton channel, linked together by a central stalk and a peripheral stalk. During catalysis, ATP synthesis in the catalytic domain of F(1) is coupled via a rotary mechanism of the central stalk subunits to proton translocation. Functionally, this protein is part of the stalk that links CF(0) to CF(1). It either transmits conformational changes from CF(0) to CF(1) or is implicated in proton conduction. The sequence is that of ATP synthase subunit delta from Acetivibrio thermocellus (strain ATCC 27405 / DSM 1237 / JCM 9322 / NBRC 103400 / NCIMB 10682 / NRRL B-4536 / VPI 7372) (Clostridium thermocellum).